We begin with the raw amino-acid sequence, 122 residues long: PA-I galactophilic lectin (122 aa).

The protein belongs to the LecA/PllA lectin family.

Its subcellular location is the cytoplasm. The protein localises to the periplasm. The protein resides in the cell surface. Its function is as follows. D-galactose specific lectin. Binds in decreasing order of affinity: melibiose, methyl-alpha-D-galactoside, D-galactose, methyl-beta-D-galactoside, N-acetyl-D-galactosamine. Similar to plant lectins in its selective (carbohydrate-specific) hemagglutinating activity. The protein is PA-I galactophilic lectin (lecA) of Pseudomonas aeruginosa (strain ATCC 15692 / DSM 22644 / CIP 104116 / JCM 14847 / LMG 12228 / 1C / PRS 101 / PAO1).